We begin with the raw amino-acid sequence, 90 residues long: Small ribosomal subunit protein bS16 (90 aa).

It belongs to the bacterial ribosomal protein bS16 family.

The chain is Small ribosomal subunit protein bS16 from Lactococcus lactis subsp. cremoris (strain MG1363).